The following is a 200-amino-acid chain: Alpha/beta-tubulin-N-acetyltransferase 9 (200 aa).

The N-acetyltransferase domain maps to 34–181 (ETLRELTASE…HEVTLERPIT (148 aa)).

Belongs to the acetyltransferase family. GNAT subfamily. In terms of assembly, interacts with microtubules as well as alpha/beta-tubulin heterodimers.

It localises to the nucleus. The protein resides in the cytoplasm. Its subcellular location is the cytoskeleton. It is found in the spindle. The protein localises to the spindle pole. It catalyses the reaction N-terminal L-methionyl-[tubulin] + acetyl-CoA = N-terminal N(alpha)-acetyl-L-methionyl-[tubulin] + CoA + H(+). In terms of biological role, N-acetyltransferase that mediates the acetylation of the N-terminal residues of alpha- and beta-tubulin. Required for microtubule stability and inhibition of JNK signaling to promote cell survival during development, possibly acting independently of its N-acetyltransferase activity. Necessary for the stabilization of spindle microtubules and for mitosis progression. Regulates microtubule stability by inhibiting Spastin-mediated depolymerization and promoting Eb1-mediated polymerization. This is Alpha/beta-tubulin-N-acetyltransferase 9 from Drosophila melanogaster (Fruit fly).